Reading from the N-terminus, the 140-residue chain is Large ribosomal subunit protein uL14x/uL14z/uL14y (140 aa).

It belongs to the universal ribosomal protein uL14 family.

The polypeptide is Large ribosomal subunit protein uL14x/uL14z/uL14y (RPL23A) (Arabidopsis thaliana (Mouse-ear cress)).